The sequence spans 512 residues: Hyaluronidase PH-20 (512 aa).

The N-terminal stretch at 1–35 (MGELRFKHLFWGSFVESGGTFQTVLIFLLIPCSLT) is a signal peptide. Asn-46 carries an N-linked (GlcNAc...) asparagine glycan. Disulfide bonds link Cys-60–Cys-351 and Cys-223–Cys-237. Glu-147 functions as the Proton donor in the catalytic mechanism. Residue Asn-165 is glycosylated (N-linked (GlcNAc...) asparagine). Asn-293 and Asn-368 each carry an N-linked (GlcNAc...) asparagine glycan. Intrachain disulfides connect Cys-376–Cys-387, Cys-381–Cys-435, and Cys-437–Cys-464.

It belongs to the glycosyl hydrolase 56 family.

It is found in the cell membrane. It catalyses the reaction Random hydrolysis of (1-&gt;4)-linkages between N-acetyl-beta-D-glucosamine and D-glucuronate residues in hyaluronate.. Its function is as follows. Involved in sperm-egg adhesion. Upon fertilization sperm must first penetrate a layer of cumulus cells that surrounds the egg before reaching the zona pellucida. The cumulus cells are embedded in a matrix containing hyaluronic acid which is formed prior to ovulation. This protein aids in penetrating the layer of cumulus cells by digesting hyaluronic acid. This is Hyaluronidase PH-20 (Spam1) from Mus musculus (Mouse).